A 153-amino-acid polypeptide reads, in one-letter code: Large ribosomal subunit protein uL22 (153 aa).

It belongs to the universal ribosomal protein uL22 family. In terms of assembly, part of the 50S ribosomal subunit.

Its function is as follows. This protein binds specifically to 23S rRNA. It makes multiple contacts with different domains of the 23S rRNA in the assembled 50S subunit and ribosome. Functionally, the globular domain of the protein is located near the polypeptide exit tunnel on the outside of the subunit, while an extended beta-hairpin is found that lines the wall of the exit tunnel in the center of the 70S ribosome. In Methanococcus maripaludis (strain DSM 14266 / JCM 13030 / NBRC 101832 / S2 / LL), this protein is Large ribosomal subunit protein uL22.